Here is a 141-residue protein sequence, read N- to C-terminus: MGRSMVLISAVVLAFLVAAPIPEVTAKKYLVGDKKFWNPNINYTLWAQGKHFYVGDWLYFVFYRDQHNILEVNKADYEKCISNRPIRNYTRGAGRDIVPLYETRRYYLLDGRGGCVQGMKLDVLVETPPPPPPFTPPPPAQ.

The N-terminal stretch at 1-26 (MGRSMVLISAVVLAFLVAAPIPEVTA) is a signal peptide. The region spanning 27 to 127 (KKYLVGDKKF…GMKLDVLVET (101 aa)) is the Phytocyanin domain. 2 N-linked (GlcNAc...) asparagine glycosylation sites follow: N42 and N88. Residues C80 and C115 are joined by a disulfide bond.

The protein belongs to the early nodulin-like (ENODL) family.

In terms of biological role, may act as a carbohydrate transporter. The polypeptide is Early nodulin-like protein 19 (Arabidopsis thaliana (Mouse-ear cress)).